The sequence spans 221 residues: Small histidine-alanine-rich protein (221 aa).

A signal peptide spans 1–21 (MVSFSKNKILSAAVFASVLLL). A compositionally biased stretch (basic and acidic residues) spans 52–67 (AHAGDAHHAHHVADAH). 2 disordered regions span residues 52–141 (AHAG…AANA) and 180–221 (AHHD…HLHH). Repeat copies occupy residues 57-59 (AHH) and 60-62 (AHH). Positions 57–68 (AHHAHHVADAHH) are 4 X 3 AA approximate tandem repeats of A-H-H. The stretch at 63 to 65 (VAD) is one 1-3; approximate repeat. 13 repeat units span residues 66–68 (AHH), 69–74 (AHHAAN), 75–80 (AHHAAN), 81–86 (AHHAAN), 87–92 (AHHAAN), 93–98 (AHHAAN), 99–104 (AHHAAN), 105–110 (AHHAAN), 111–116 (AHHAAN), 117–122 (AHHAAN), 123–128 (AHHAAN), 129–134 (AHHAAN), and 135–140 (AHHAAN). Residues 69-146 (AHHAANAHHA…HAANAHHAAD (78 aa)) form a 13 X 6 AA approximate tandem repeats of A-H-H-A-A-N region. A compositionally biased stretch (low complexity) spans 75–141 (AHHAANAHHA…AANAHHAANA (67 aa)). The 2-13; approximate repeat unit spans residues 141–146 (AHHAAD). A run of 7 repeats spans residues 176-180 (HHDDA), 181-185 (HHDGA), 186-190 (HHDDA), 191-195 (HHDGA), 196-200 (HHDGA), 201-205 (HHDGA), and 206-210 (HHDGA). The segment at 176 to 210 (HHDDAHHDGAHHDDAHHDGAHHDGAHHDGAHHDGA) is 7 X 5 AA tandem repeats of H-H-D-[DG]-A. A compositionally biased stretch (basic and acidic residues) spans 180-211 (AHHDGAHHDDAHHDGAHHDGAHHDGAHHDGAH).

This chain is Small histidine-alanine-rich protein, found in Plasmodium falciparum (isolate FC27 / Papua New Guinea).